The following is a 639-amino-acid chain: Versicolorin B synthase stcN (639 aa).

The first 19 residues, methionine 1–alanine 19, serve as a signal peptide directing secretion. Residues threonine 77–alanine 78 and glutamate 98–alanine 99 contribute to the FAD site. N-linked (GlcNAc...) asparagine glycosylation occurs at asparagine 109. FAD is bound at residue glycine 164 to leucine 167. N-linked (GlcNAc...) asparagine glycosylation occurs at asparagine 214. A PAS domain is found at glycine 263–serine 301. Asparagine 444 and asparagine 501 each carry an N-linked (GlcNAc...) asparagine glycan. FAD is bound by residues alanine 609 and proline 620–methionine 621.

The protein belongs to the GMC oxidoreductase family. As to quaternary structure, homodimer. Requires FAD as cofactor.

The protein localises to the cytoplasm. The protein resides in the cytosol. The enzyme catalyses (2S-3S)-versiconal hemiacetal = versicolorin B + H2O. The catalysed reaction is (S)-5'-oxoaverantin + H(+) = (1'S,5'S)-averufin + H2O. It participates in mycotoxin biosynthesis; sterigmatocystin biosynthesis. In terms of biological role, norsolorinic acid reductase; part of the gene cluster that mediates the biosynthesis of sterigmatocystin (ST), a polyketide-derived furanocoumarin which is part of the most toxic and carcinogenic compounds among the known mycotoxins. The first step in the biosynthesis of sterigmatocystin is the production of hexanoate by the fatty acid synthase (FAS) units stcJ and stcK. The polyketide backbone is assembled by the non-reducing polyketide synthase stcA by condensation of the starter hexanoyl-CoA and 7 malonyl-CoA extender units followed by cyclization and release of norsolorinic acid. Norsolorinic acid is the first stable intermediate in the biosynthesis of sterigmatocystin and is converted into averantin (AVN) by the ketoreductase stcE which reduces the hexanoate ketone to an alcohol. Averantin is then oxidized into 5'-hydroxyaverantin (HAVN) by the cytochrome P450 monooxygenase stcF. 5'-hydroxyaverantin is further converted to 5'-oxyaverantin (OAVN) by the 5'-hydroxyaverantin dehydrogenase stcG. The next step is the conversion of OAVN into averufin (AVF) which is catalyzed by a yet to be identified enzyme. The cytochrome P450 monooxygenase stcB and the flavin-binding monooxygenase stcW are both required for the conversion of averufin to 1-hydroxyversicolorone. The esterase stcI probably catalyzes the formation of versiconal hemiacetal acetate from 1-hydroxyversicolorone. The oxydoreductase stcN then probably catalyzes the biosynthetic step from versiconal to versicolorin B (VERB). The next step is performed by the versicolorin B desaturase stcL to produce versicolorin A (VERA). The ketoreductase stcU and the cytochrome P450 monooxygenase stcS are involved in the conversion of versicolorin A to demethylsterigmatocystin. The Baeyer-Villiger oxidas stcQ and the reductase stcR might be involved in the biosynthetic step from versicolorin A to demethylsterigmatocystin. The final step in the biosynthesis of sterigmatocystin is the methylation of demethylsterigmatocystin catalyzed by the methyltransferase stcP. The sequence is that of Versicolorin B synthase stcN from Emericella nidulans (strain FGSC A4 / ATCC 38163 / CBS 112.46 / NRRL 194 / M139) (Aspergillus nidulans).